The chain runs to 256 residues: MRILLTNDDGIHAEGLSVLERIARTISDDVWVVAPEVDQSGLAHSLTLSEPLRLRPVSERRFALRGTPTDCVIMAVKKILDRKPDLVLSGVNVGANLADDVTYSGTVAGAIEGTLQGIRSIALSQAYQHAVGRDVPWDVAETHAPALIRTLMGVDLPDGTLINLNFPNCAVDAVAGVEVTSQGKLEFGLSIDERTDGRGFPYFWLRFGERAGDFRSGTDIRALRDNRISVTPLKLDMTDHAAQERIAQALREGSVA.

A divalent metal cation contacts are provided by Asp8, Asp9, Ser40, and Asn92.

It belongs to the SurE nucleotidase family. It depends on a divalent metal cation as a cofactor.

It localises to the cytoplasm. It carries out the reaction a ribonucleoside 5'-phosphate + H2O = a ribonucleoside + phosphate. In terms of biological role, nucleotidase that shows phosphatase activity on nucleoside 5'-monophosphates. The sequence is that of 5'-nucleotidase SurE from Rhizobium meliloti (strain 1021) (Ensifer meliloti).